Consider the following 86-residue polypeptide: UPF0297 protein BBR47_19030 (86 aa).

The protein belongs to the UPF0297 family.

This is UPF0297 protein BBR47_19030 from Brevibacillus brevis (strain 47 / JCM 6285 / NBRC 100599).